The following is a 362-amino-acid chain: 3-dehydroquinate synthase (362 aa).

NAD(+) is bound by residues 71–76 (DGEQYK), 105–109 (GVVGD), 129–130 (TT), K142, K151, and 169–172 (CLKT). E184, H247, and H264 together coordinate Zn(2+).

The protein belongs to the sugar phosphate cyclases superfamily. Dehydroquinate synthase family. Requires Co(2+) as cofactor. The cofactor is Zn(2+). It depends on NAD(+) as a cofactor.

Its subcellular location is the cytoplasm. It catalyses the reaction 7-phospho-2-dehydro-3-deoxy-D-arabino-heptonate = 3-dehydroquinate + phosphate. Its pathway is metabolic intermediate biosynthesis; chorismate biosynthesis; chorismate from D-erythrose 4-phosphate and phosphoenolpyruvate: step 2/7. Catalyzes the conversion of 3-deoxy-D-arabino-heptulosonate 7-phosphate (DAHP) to dehydroquinate (DHQ). The polypeptide is 3-dehydroquinate synthase (Escherichia coli (strain K12 / MC4100 / BW2952)).